We begin with the raw amino-acid sequence, 357 residues long: DNA integrity scanning protein DisA (357 aa).

The DAC domain maps to 8–146 (VKSMINILQL…GNLRYTLKDI (139 aa)). ATP contacts are provided by residues Gly-75, Leu-93, and 106-110 (MRHRT).

The protein belongs to the DisA family. Homooctamer. Mg(2+) is required as a cofactor.

The catalysed reaction is 2 ATP = 3',3'-c-di-AMP + 2 diphosphate. Its function is as follows. Participates in a DNA-damage check-point that is active prior to asymmetric division when DNA is damaged. DisA forms globular foci that rapidly scan along the chromosomes during sporulation, searching for lesions. When a lesion is present, DisA pauses at the lesion site. This triggers a cellular response that culminates in a temporary block in sporulation initiation. Also has diadenylate cyclase activity, catalyzing the condensation of 2 ATP molecules into cyclic di-AMP (c-di-AMP). c-di-AMP acts as a signaling molecule that couples DNA integrity with progression of sporulation. The rise in c-di-AMP level generated by DisA while scanning the chromosome, operates as a positive signal that advances sporulation; upon encountering a lesion, the DisA focus arrests at the damaged site and halts c-di-AMP synthesis. The polypeptide is DNA integrity scanning protein DisA (Bacillus mycoides (strain KBAB4) (Bacillus weihenstephanensis)).